We begin with the raw amino-acid sequence, 225 residues long: Membrane protein (225 aa).

At 1–20 the chain is on the virion surface side; sequence MSNETNCTLDFEQSVQLFKE. Residues asparagine 3 and asparagine 6 are each glycosylated (N-linked (GlcNAc...) asparagine; by host). Residues 21–41 form a helical membrane-spanning segment; it reads YNLFITAFLLFLTIILQYGYA. At 42-51 the chain is on the intravirion side; sequence TRSKVIYTLK. A helical membrane pass occupies residues 52–72; the sequence is MIVLWCFWPLNIAVGVISCIY. Residues 73-77 are Virion surface-facing; that stretch reads PPNTG. The helical transmembrane segment at 78–98 threads the bilayer; sequence GLVAAIILTVFACLSFVGYWI. Topologically, residues 99 to 225 are intravirion; sequence QSIRLFKRCR…VATGGSSLYT (127 aa).

It belongs to the gammacoronaviruses M protein family. As to quaternary structure, homomultimer. Interacts with envelope E protein in the budding compartment of the host cell, which is located between endoplasmic reticulum and the Golgi complex. Forms a complex with HE and S proteins. Interacts with nucleocapsid N protein. This interaction probably participates in RNA packaging into the virus.

Its subcellular location is the virion membrane. It is found in the host Golgi apparatus membrane. Component of the viral envelope that plays a central role in virus morphogenesis and assembly via its interactions with other viral proteins. The sequence is that of Membrane protein from Gallus gallus (Chicken).